Consider the following 420-residue polypeptide: Histidine--tRNA ligase (420 aa).

The protein belongs to the class-II aminoacyl-tRNA synthetase family. Homodimer.

It localises to the cytoplasm. It catalyses the reaction tRNA(His) + L-histidine + ATP = L-histidyl-tRNA(His) + AMP + diphosphate + H(+). The protein is Histidine--tRNA ligase (hisS) of Mycoplasmopsis pulmonis (strain UAB CTIP) (Mycoplasma pulmonis).